The chain runs to 145 residues: Mediator of RNA polymerase II transcription subunit 21 (145 aa).

Residues 79 to 112 adopt a coiled-coil conformation; that stretch reads EESTAALQAASLRQLEEENQEAAARLEEVVYRGD.

It belongs to the Mediator complex subunit 21 family. As to quaternary structure, component of the Mediator complex.

Its subcellular location is the nucleus. In terms of biological role, component of the Mediator complex, a coactivator involved in the regulated transcription of nearly all RNA polymerase II-dependent genes. Mediator functions as a bridge to convey information from gene-specific regulatory proteins to the basal RNA polymerase II transcription machinery. Mediator is recruited to promoters by direct interactions with regulatory proteins and serves as a scaffold for the assembly of a functional preinitiation complex with RNA polymerase II and the general transcription factors. The chain is Mediator of RNA polymerase II transcription subunit 21 (med21) from Danio rerio (Zebrafish).